A 523-amino-acid chain; its full sequence is Peptide chain release factor 3 (523 aa).

In terms of domain architecture, tr-type G spans 10–277 (EKRRTFAIIS…SFVDLAPAPE (268 aa)). Residues 19–26 (SHPDAGKT), 87–91 (DTPGH), and 141–144 (NKLD) contribute to the GTP site.

This sequence belongs to the TRAFAC class translation factor GTPase superfamily. Classic translation factor GTPase family. PrfC subfamily.

The protein localises to the cytoplasm. Functionally, increases the formation of ribosomal termination complexes and stimulates activities of RF-1 and RF-2. It binds guanine nucleotides and has strong preference for UGA stop codons. It may interact directly with the ribosome. The stimulation of RF-1 and RF-2 is significantly reduced by GTP and GDP, but not by GMP. The chain is Peptide chain release factor 3 from Lactobacillus acidophilus (strain ATCC 700396 / NCK56 / N2 / NCFM).